The primary structure comprises 270 residues: Putative pyruvate, phosphate dikinase regulatory protein (270 aa).

150-157 is an ADP binding site; it reads GPSRTSKS.

This sequence belongs to the pyruvate, phosphate/water dikinase regulatory protein family. PDRP subfamily.

It catalyses the reaction N(tele)-phospho-L-histidyl/L-threonyl-[pyruvate, phosphate dikinase] + ADP = N(tele)-phospho-L-histidyl/O-phospho-L-threonyl-[pyruvate, phosphate dikinase] + AMP + H(+). It carries out the reaction N(tele)-phospho-L-histidyl/O-phospho-L-threonyl-[pyruvate, phosphate dikinase] + phosphate + H(+) = N(tele)-phospho-L-histidyl/L-threonyl-[pyruvate, phosphate dikinase] + diphosphate. Bifunctional serine/threonine kinase and phosphorylase involved in the regulation of the pyruvate, phosphate dikinase (PPDK) by catalyzing its phosphorylation/dephosphorylation. The polypeptide is Putative pyruvate, phosphate dikinase regulatory protein (Neorickettsia sennetsu (strain ATCC VR-367 / Miyayama) (Ehrlichia sennetsu)).